The sequence spans 437 residues: Pterin deaminase (437 aa).

Positions 80 and 82 each coordinate a divalent metal cation. A substrate-binding site is contributed by Lys85. Residue His231 participates in a divalent metal cation binding. Glu234 functions as the Proton donor in the catalytic mechanism. Position 331 (Asp331) interacts with a divalent metal cation. 331–332 (DN) is a substrate binding site.

The protein belongs to the metallo-dependent hydrolases superfamily. Pterin deaminase family. A divalent metal cation serves as cofactor.

It carries out the reaction a 2-amino-4-hydroxypteridine + H2O + H(+) = a 2,4-dihydroxypteridine + NH4(+). The catalysed reaction is L-sepiapterin + H2O + H(+) = (S)-xanthopterin-B2 + NH4(+). In terms of biological role, catalyzes the deamination of many pterin metabolites, such as formylpterin, pterin-6-carboxylate, pterin-7-carboxylate, pterin, hydroxymethylpterin, biopterin, D-(+)-neopterin, isoxanthopterin, sepiapterin, folate, xanthopterin, and 7,8-dihydrohydroxymethylpterin. May be involved in a degradative pathway for catabolizing pterin rings. The protein is Pterin deaminase of Rhizobium rhizogenes (strain K84 / ATCC BAA-868) (Agrobacterium radiobacter).